The sequence spans 144 residues: Transcriptional regulator SlyA (144 aa).

The HTH marR-type domain occupies 2–135; that stretch reads ESPLGSDLAR…LIKLIAKLEH (134 aa). A DNA-binding region (H-T-H motif) is located at residues 49 to 72; the sequence is QIQLAKAIGIEQPSLVRTLDQLED.

Belongs to the SlyA family. As to quaternary structure, homodimer.

It is found in the cytoplasm. Transcription regulator that can specifically activate or repress expression of target genes. Required for virulence and survival in the macrophage environment. Probably activates the transcription of ssrB. Independently of ssrB activation, capable of stimulating the expression of virulence genes found on pathogenicity island 2 (SPI2). Probably activates expression of ispA, xseB genes, and of omp operon. The protein is Transcriptional regulator SlyA of Salmonella typhimurium (strain LT2 / SGSC1412 / ATCC 700720).